The following is a 129-amino-acid chain: Phosphoribosyl-AMP cyclohydrolase (129 aa).

A Mg(2+)-binding site is contributed by D76. C77 serves as a coordination point for Zn(2+). 2 residues coordinate Mg(2+): D78 and D80. Residues C97 and C104 each coordinate Zn(2+).

This sequence belongs to the PRA-CH family. Homodimer. Requires Mg(2+) as cofactor. Zn(2+) is required as a cofactor.

The protein localises to the cytoplasm. The enzyme catalyses 1-(5-phospho-beta-D-ribosyl)-5'-AMP + H2O = 1-(5-phospho-beta-D-ribosyl)-5-[(5-phospho-beta-D-ribosylamino)methylideneamino]imidazole-4-carboxamide. Its pathway is amino-acid biosynthesis; L-histidine biosynthesis; L-histidine from 5-phospho-alpha-D-ribose 1-diphosphate: step 3/9. Its function is as follows. Catalyzes the hydrolysis of the adenine ring of phosphoribosyl-AMP. This chain is Phosphoribosyl-AMP cyclohydrolase, found in Albidiferax ferrireducens (strain ATCC BAA-621 / DSM 15236 / T118) (Rhodoferax ferrireducens).